The following is an 842-amino-acid chain: Alanine--tRNA ligase (842 aa).

Residues H549, H553, C650, and H654 each coordinate Zn(2+).

This sequence belongs to the class-II aminoacyl-tRNA synthetase family. Zn(2+) is required as a cofactor.

It localises to the cytoplasm. The catalysed reaction is tRNA(Ala) + L-alanine + ATP = L-alanyl-tRNA(Ala) + AMP + diphosphate. Catalyzes the attachment of alanine to tRNA(Ala) in a two-step reaction: alanine is first activated by ATP to form Ala-AMP and then transferred to the acceptor end of tRNA(Ala). Also edits incorrectly charged Ser-tRNA(Ala) and Gly-tRNA(Ala) via its editing domain. The polypeptide is Alanine--tRNA ligase (Campylobacter jejuni (strain RM1221)).